The sequence spans 687 residues: DNA-directed RNA polymerase subunit beta' (687 aa).

Zn(2+) is bound by residues cysteine 69, cysteine 71, cysteine 87, and cysteine 90. Mg(2+) is bound by residues aspartate 495, aspartate 497, and aspartate 499.

Belongs to the RNA polymerase beta' chain family. RpoC1 subfamily. In terms of assembly, in plastids the minimal PEP RNA polymerase catalytic core is composed of four subunits: alpha, beta, beta', and beta''. When a (nuclear-encoded) sigma factor is associated with the core the holoenzyme is formed, which can initiate transcription. Mg(2+) is required as a cofactor. Zn(2+) serves as cofactor.

It localises to the plastid. It is found in the chloroplast. It catalyses the reaction RNA(n) + a ribonucleoside 5'-triphosphate = RNA(n+1) + diphosphate. Functionally, DNA-dependent RNA polymerase catalyzes the transcription of DNA into RNA using the four ribonucleoside triphosphates as substrates. This is DNA-directed RNA polymerase subunit beta' from Solanum tuberosum (Potato).